The sequence spans 72 residues: Small ribosomal subunit protein bS18c (72 aa).

It belongs to the bacterial ribosomal protein bS18 family. Part of the 30S ribosomal subunit.

The protein resides in the plastid. Its subcellular location is the chloroplast. In Emiliania huxleyi (Coccolithophore), this protein is Small ribosomal subunit protein bS18c.